We begin with the raw amino-acid sequence, 772 residues long: Lon protease (772 aa).

The Lon N-terminal domain occupies Y6–V200. G352–T359 serves as a coordination point for ATP. Positions Q588–D769 constitute a Lon proteolytic domain. Active-site residues include S675 and K718.

It belongs to the peptidase S16 family. In terms of assembly, homohexamer. Organized in a ring with a central cavity.

The protein resides in the cytoplasm. The catalysed reaction is Hydrolysis of proteins in presence of ATP.. Functionally, ATP-dependent serine protease that mediates the selective degradation of mutant and abnormal proteins as well as certain short-lived regulatory proteins. Required for cellular homeostasis and for survival from DNA damage and developmental changes induced by stress. Degrades polypeptides processively to yield small peptide fragments that are 5 to 10 amino acids long. Binds to DNA in a double-stranded, site-specific manner. This chain is Lon protease, found in Nitrosococcus oceani (strain ATCC 19707 / BCRC 17464 / JCM 30415 / NCIMB 11848 / C-107).